The sequence spans 427 residues: Gamma-glutamyl phosphate reductase (427 aa).

It belongs to the gamma-glutamyl phosphate reductase family.

Its subcellular location is the cytoplasm. The enzyme catalyses L-glutamate 5-semialdehyde + phosphate + NADP(+) = L-glutamyl 5-phosphate + NADPH + H(+). It functions in the pathway amino-acid biosynthesis; L-proline biosynthesis; L-glutamate 5-semialdehyde from L-glutamate: step 2/2. Its function is as follows. Catalyzes the NADPH-dependent reduction of L-glutamate 5-phosphate into L-glutamate 5-semialdehyde and phosphate. The product spontaneously undergoes cyclization to form 1-pyrroline-5-carboxylate. This Anaeromyxobacter sp. (strain K) protein is Gamma-glutamyl phosphate reductase.